A 165-amino-acid chain; its full sequence is Shikimate kinase (165 aa).

11–16 (GAGKTT) provides a ligand contact to ATP. Threonine 15 lines the Mg(2+) pocket. 3 residues coordinate substrate: aspartate 33, arginine 57, and glycine 78. Arginine 116 provides a ligand contact to ATP. Substrate is bound at residue arginine 134.

The protein belongs to the shikimate kinase family. As to quaternary structure, monomer. Mg(2+) is required as a cofactor.

It localises to the cytoplasm. It catalyses the reaction shikimate + ATP = 3-phosphoshikimate + ADP + H(+). Its pathway is metabolic intermediate biosynthesis; chorismate biosynthesis; chorismate from D-erythrose 4-phosphate and phosphoenolpyruvate: step 5/7. Catalyzes the specific phosphorylation of the 3-hydroxyl group of shikimic acid using ATP as a cosubstrate. This chain is Shikimate kinase, found in Bacillus anthracis (strain A0248).